Reading from the N-terminus, the 100-residue chain is uncharacterized protein (100 aa).

Helical transmembrane passes span 9 to 29, 41 to 61, and 72 to 92; these read VYTY…SWVV, PYLI…ITAP, and SIPF…FLGI.

The protein localises to the membrane. This is an uncharacterized protein from Saccharomyces cerevisiae (strain ATCC 204508 / S288c) (Baker's yeast).